A 183-amino-acid polypeptide reads, in one-letter code: MNKDNLIQNYAVALFNNALLDNIQVKICEEITLLNSIIEDSFEIKKFLFSPLVNKIDKINVFNSLVKTTNFNKIVNNFLLLLIKNSRTHILSNIVEVYNKLLYESRNIKIVHVISTNELQPKEQEWIQSRIEKELQHKTELFFDIDNTIIGGIVIKYDNVLRDYSIKGSLEKIAKCLKNVKIC.

It belongs to the ATPase delta chain family. F-type ATPases have 2 components, F(1) - the catalytic core - and F(0) - the membrane proton channel. F(1) has five subunits: alpha(3), beta(3), gamma(1), delta(1), epsilon(1). F(0) has three main subunits: a(1), b(2) and c(10-14). The alpha and beta chains form an alternating ring which encloses part of the gamma chain. F(1) is attached to F(0) by a central stalk formed by the gamma and epsilon chains, while a peripheral stalk is formed by the delta and b chains.

It is found in the cell inner membrane. In terms of biological role, f(1)F(0) ATP synthase produces ATP from ADP in the presence of a proton or sodium gradient. F-type ATPases consist of two structural domains, F(1) containing the extramembraneous catalytic core and F(0) containing the membrane proton channel, linked together by a central stalk and a peripheral stalk. During catalysis, ATP synthesis in the catalytic domain of F(1) is coupled via a rotary mechanism of the central stalk subunits to proton translocation. This protein is part of the stalk that links CF(0) to CF(1). It either transmits conformational changes from CF(0) to CF(1) or is implicated in proton conduction. This Rickettsia prowazekii (strain Madrid E) protein is ATP synthase subunit delta.